A 159-amino-acid polypeptide reads, in one-letter code: MGGLKKPKKKYLAGKPKKIWNKQLLLEELQLMGEYGLRNKKELWLARAHLKWIVRRARSLLSMTAEERAPLELPFKEKLYKMGFIEDPNVPLDRVLSLDVRAILERRLQTIVYRMGLAKSIYHARQLIVHGHIAVAGRRVSSPGFLVPRELEDKISLIQ.

Positions 106 to 158 (RRLQTIVYRMGLAKSIYHARQLIVHGHIAVAGRRVSSPGFLVPRELEDKISLI) constitute an S4 RNA-binding domain.

This sequence belongs to the universal ribosomal protein uS4 family. Part of the 30S ribosomal subunit. Contacts protein S5. The interaction surface between S4 and S5 is involved in control of translational fidelity.

One of the primary rRNA binding proteins, it binds directly to 16S rRNA where it nucleates assembly of the body of the 30S subunit. Functionally, with S5 and S12 plays an important role in translational accuracy. The sequence is that of Small ribosomal subunit protein uS4 from Pyrobaculum neutrophilum (strain DSM 2338 / JCM 9278 / NBRC 100436 / V24Sta) (Thermoproteus neutrophilus).